The chain runs to 342 residues: Putative anthocyanidin reductase (342 aa).

NADP(+) is bound by residues Arg-44, Lys-51, 71-72, 91-93, Tyr-172, Lys-176, 199-202, and Ser-214; these read EL, VAT, and PVLV. Residue Lys-176 is the Proton donor of the active site.

Belongs to the NAD(P)-dependent epimerase/dehydratase family. Dihydroflavonol-4-reductase subfamily. As to expression, highly expressed in leaves and weakly in stems. Not expressed in roots.

The protein operates within secondary metabolite biosynthesis; flavonoid biosynthesis. This chain is Putative anthocyanidin reductase, found in Ginkgo biloba (Ginkgo).